The primary structure comprises 286 residues: Quinone oxidoreductase 2 (286 aa).

Residues 6–11 (GATGQL), R33, 73–75 (SSS), 138–143 (GWYSEN), and R171 each bind NADP(+).

This sequence belongs to the NmrA-type oxidoreductase family. Monomer.

It carries out the reaction a quinone + NADH + H(+) = a quinol + NAD(+). The catalysed reaction is a quinone + NADPH + H(+) = a quinol + NADP(+). In terms of biological role, quinone oxidoreductase that may play some additional role beyond quinone reduction. Potential redox sensor protein. Overexpression induces retardation of growth. The polypeptide is Quinone oxidoreductase 2 (qorB) (Escherichia coli (strain K12)).